Reading from the N-terminus, the 394-residue chain is MSKEKFQRLKPHINVGTIGHVDHGKTTLTAAITTVLSKKFGGSARAFDQIDNAPEEKARGITINTSHVEYDTEFRHYAHVDCPGHADYIKNMITGAAQMDGAILVVAATDGPMPQTREHILLGRQVGVPYIIVFLNKCDMVDDEELLELVEMEVRDLLTQYDFPGDDTPIIRGSALKALEGDPEWESKIIDLSKFLDSYIPEPKRAVDQPFLLPIEDVFSISGRGTVVTGRVEKGIIKVGEEVEIVGIKKTTKTTCTGVEMFRKLLDEGRAGENVGVLLRGTKRDEIERGQVLAKPGSIHPHTTFESEVYVLSKEEGGRHTPFFKGYRPQFYFRTTDVTGSIELPEGIEMVMPGDNIKMTVTLINPIAMADGLRFAIREGGRTVGAGVVSKVLL.

In terms of domain architecture, tr-type G spans 10 to 204; sequence KPHINVGTIG…FLDSYIPEPK (195 aa). Positions 19–26 are G1; sequence GHVDHGKT. 19–26 is a binding site for GTP; sequence GHVDHGKT. Mg(2+) is bound at residue T26. A G2 region spans residues 60 to 64; sequence GITIN. Positions 81 to 84 are G3; the sequence is DCPG. GTP-binding positions include 81 to 85 and 136 to 139; these read DCPGH and NKCD. Residues 136-139 form a G4 region; it reads NKCD. The G5 stretch occupies residues 174–176; the sequence is SAL.

The protein belongs to the TRAFAC class translation factor GTPase superfamily. Classic translation factor GTPase family. EF-Tu/EF-1A subfamily. As to quaternary structure, monomer.

The protein localises to the cytoplasm. It carries out the reaction GTP + H2O = GDP + phosphate + H(+). GTP hydrolase that promotes the GTP-dependent binding of aminoacyl-tRNA to the A-site of ribosomes during protein biosynthesis. In Buchnera aphidicola subsp. Acyrthosiphon pisum (strain 5A), this protein is Elongation factor Tu.